Here is a 111-residue protein sequence, read N- to C-terminus: uncharacterized protein (111 aa).

2 helical membrane-spanning segments follow: residues 27 to 47 (IIVL…GYKF) and 80 to 100 (IFTG…ISAI).

The protein localises to the membrane. This is an uncharacterized protein from Acanthamoeba polyphaga (Amoeba).